The primary structure comprises 165 residues: UPF0254 protein MmarC6_1720 (165 aa).

It belongs to the UPF0254 family.

This chain is UPF0254 protein MmarC6_1720, found in Methanococcus maripaludis (strain C6 / ATCC BAA-1332).